Consider the following 118-residue polypeptide: Ribonuclease P protein component 2 (118 aa).

This sequence belongs to the eukaryotic/archaeal RNase P protein component 2 family. As to quaternary structure, consists of a catalytic RNA component and at least 4-5 protein subunits.

The protein resides in the cytoplasm. It carries out the reaction Endonucleolytic cleavage of RNA, removing 5'-extranucleotides from tRNA precursor.. In terms of biological role, part of ribonuclease P, a protein complex that generates mature tRNA molecules by cleaving their 5'-ends. The sequence is that of Ribonuclease P protein component 2 from Pyrococcus abyssi (strain GE5 / Orsay).